The chain runs to 188 residues: ATP synthase subunit b, chloroplastic (188 aa).

The chain crosses the membrane as a helical span at residues 35 to 57 (LINLAVVIGVLVYFGKGVLTTLL).

It belongs to the ATPase B chain family. In terms of assembly, F-type ATPases have 2 components, F(1) - the catalytic core - and F(0) - the membrane proton channel. F(1) has five subunits: alpha(3), beta(3), gamma(1), delta(1), epsilon(1). F(0) has four main subunits: a(1), b(1), b'(1) and c(10-14). The alpha and beta chains form an alternating ring which encloses part of the gamma chain. F(1) is attached to F(0) by a central stalk formed by the gamma and epsilon chains, while a peripheral stalk is formed by the delta, b and b' chains.

It is found in the plastid. Its subcellular location is the chloroplast thylakoid membrane. Its function is as follows. F(1)F(0) ATP synthase produces ATP from ADP in the presence of a proton or sodium gradient. F-type ATPases consist of two structural domains, F(1) containing the extramembraneous catalytic core and F(0) containing the membrane proton channel, linked together by a central stalk and a peripheral stalk. During catalysis, ATP synthesis in the catalytic domain of F(1) is coupled via a rotary mechanism of the central stalk subunits to proton translocation. Functionally, component of the F(0) channel, it forms part of the peripheral stalk, linking F(1) to F(0). The sequence is that of ATP synthase subunit b, chloroplastic from Zygnema circumcarinatum (Green alga).